The primary structure comprises 242 residues: Probable transcriptional regulatory protein Bxeno_A1185 (242 aa).

Belongs to the TACO1 family.

The protein resides in the cytoplasm. The polypeptide is Probable transcriptional regulatory protein Bxeno_A1185 (Paraburkholderia xenovorans (strain LB400)).